The sequence spans 214 residues: Cell division protein SepF (214 aa).

Positions 23–70 (YYDDRAPSRGFPRPRFDDGYGRYDGDDYDDPRREPADYPPPAGYRGGY) are disordered. The span at 36–58 (PRFDDGYGRYDGDDYDDPRREPA) shows a compositional bias: basic and acidic residues.

Belongs to the SepF family. In terms of assembly, homodimer. Interacts with FtsZ.

It is found in the cytoplasm. In terms of biological role, cell division protein that is part of the divisome complex and is recruited early to the Z-ring. Probably stimulates Z-ring formation, perhaps through the cross-linking of FtsZ protofilaments. Its function overlaps with FtsA. This Mycobacterium avium (strain 104) protein is Cell division protein SepF.